The sequence spans 561 residues: 4-coumarate--CoA ligase 3 (561 aa).

Serine 213, serine 214, glycine 215, threonine 216, threonine 217, and lysine 221 together coordinate ATP. The (E)-4-coumaroyl-AMP site is built by tyrosine 263 and serine 267. Position 284 (lysine 284) interacts with CoA. The SBD1 stretch occupies residues glutamate 286–glutamine 355. Residues alanine 333, glutamine 355, glycine 356, threonine 360, and methionine 368 each contribute to the (E)-4-coumaroyl-AMP site. The ATP site is built by glutamine 355, glycine 356, and threonine 360. Residues glycine 356–tyrosine 423 form an SBD2 region. ATP is bound by residues aspartate 444 and arginine 459. The (E)-4-coumaroyl-AMP site is built by lysine 461 and lysine 465. 2 residues coordinate CoA: lysine 467 and glycine 468. Lysine 550 contacts ATP.

The protein belongs to the ATP-dependent AMP-binding enzyme family. Mg(2+) serves as cofactor. As to expression, preferentially expressed in leaves, flowers and siliques.

It carries out the reaction (E)-4-coumarate + ATP + CoA = (E)-4-coumaroyl-CoA + AMP + diphosphate. The enzyme catalyses (E)-caffeate + ATP + CoA = (E)-caffeoyl-CoA + AMP + diphosphate. The catalysed reaction is (E)-ferulate + ATP + CoA = (E)-feruloyl-CoA + AMP + diphosphate. It catalyses the reaction (E)-4-coumarate + ATP + H(+) = (E)-4-coumaroyl-AMP + diphosphate. It carries out the reaction (E)-4-coumaroyl-AMP + CoA = (E)-4-coumaroyl-CoA + AMP + H(+). The enzyme catalyses (E)-caffeate + ATP + H(+) = (E)-caffeoyl-AMP + diphosphate. The catalysed reaction is (E)-caffeoyl-AMP + CoA = (E)-caffeoyl-CoA + AMP + H(+). It catalyses the reaction (E)-ferulate + ATP + H(+) = (E)-feruloyl-AMP + diphosphate. It carries out the reaction (E)-feruloyl-AMP + CoA = (E)-feruloyl-CoA + AMP + H(+). It functions in the pathway phytoalexin biosynthesis; 3,4',5-trihydroxystilbene biosynthesis; 3,4',5-trihydroxystilbene from trans-4-coumarate: step 1/2. Its function is as follows. Produces CoA thioesters of a variety of hydroxy- and methoxy-substituted cinnamic acids, which are used to synthesize several phenylpropanoid-derived compounds, including anthocyanins, flavonoids, isoflavonoids, coumarins, lignin, suberin and wall-bound phenolics. Follows a two-step reaction mechanism, wherein the carboxylate substrate first undergoes adenylation by ATP, followed by a thioesterification in the presence of CoA to yield the final CoA thioesters. In Arabidopsis thaliana (Mouse-ear cress), this protein is 4-coumarate--CoA ligase 3.